Reading from the N-terminus, the 198-residue chain is Peptide deformylase (198 aa).

Fe cation is bound by residues Cys123 and His170. The active site involves Glu171. His174 contacts Fe cation.

Belongs to the polypeptide deformylase family. Fe(2+) is required as a cofactor.

The catalysed reaction is N-terminal N-formyl-L-methionyl-[peptide] + H2O = N-terminal L-methionyl-[peptide] + formate. Its function is as follows. Removes the formyl group from the N-terminal Met of newly synthesized proteins. Requires at least a dipeptide for an efficient rate of reaction. N-terminal L-methionine is a prerequisite for activity but the enzyme has broad specificity at other positions. The protein is Peptide deformylase of Mycoplasmopsis pulmonis (strain UAB CTIP) (Mycoplasma pulmonis).